We begin with the raw amino-acid sequence, 681 residues long: Ribosomal L1 domain-containing protein CG13096 (681 aa).

2 disordered regions span residues 1–248 (MVKV…AKSK) and 579–681 (DAAP…DDEE). Residues Ser-15 and Ser-17 each carry the phosphoserine modification. The segment covering 54 to 74 (VKKDAIKKEPEVSKKGAEKKQ) has biased composition (basic and acidic residues). Phosphoserine is present on Ser-89. Low complexity predominate over residues 103–112 (KPAASGAPVG). The residue at position 128 (Ser-128) is a Phosphoserine. The segment covering 189 to 217 (QAAPAKPAKAQPASQLQKKAKAVQKLSKP) has biased composition (low complexity). The span at 599 to 610 (KESSSEGAKADA) shows a compositional bias: basic and acidic residues. Over residues 611 to 681 (ESDEEEEVEE…EDDDDDDDEE (71 aa)) the composition is skewed to acidic residues.

It belongs to the universal ribosomal protein uL1 family. Highly divergent.

In Drosophila melanogaster (Fruit fly), this protein is Ribosomal L1 domain-containing protein CG13096.